The primary structure comprises 300 residues: tRNA dimethylallyltransferase (300 aa).

11–18 (GPTAVGKS) contributes to the ATP binding site. Residue 13-18 (TAVGKS) coordinates substrate. Residues 35–38 (DSIQ) form an interaction with substrate tRNA region.

Belongs to the IPP transferase family. As to quaternary structure, monomer. It depends on Mg(2+) as a cofactor.

It catalyses the reaction adenosine(37) in tRNA + dimethylallyl diphosphate = N(6)-dimethylallyladenosine(37) in tRNA + diphosphate. Its function is as follows. Catalyzes the transfer of a dimethylallyl group onto the adenine at position 37 in tRNAs that read codons beginning with uridine, leading to the formation of N6-(dimethylallyl)adenosine (i(6)A). This is tRNA dimethylallyltransferase from Borrelia turicatae (strain 91E135).